We begin with the raw amino-acid sequence, 512 residues long: Tyrosine decarboxylase (512 aa).

3 residues coordinate L-tyrosine: proline 100, histidine 205, and histidine 320. Lysine 321 bears the N6-(pyridoxal phosphate)lysine mark. Tyrosine 350 is a binding site for L-tyrosine.

This sequence belongs to the group II decarboxylase family. In terms of assembly, homodimer. Pyridoxal 5'-phosphate serves as cofactor. Mainly expressed in roots, stems and capsule walls.

The enzyme catalyses L-tyrosine + H(+) = tyramine + CO2. Functionally, tyrosine decarboxylase that converts tyrosine into tyramine, a precursor of isoquinoline alkaloids and various amides. The sequence is that of Tyrosine decarboxylase from Papaver somniferum (Opium poppy).